Reading from the N-terminus, the 142-residue chain is MFAVIKTGGKQYRVAANDLIKVEKVAGEAGDIVEFAEVLMVGSTIGAPTVAGALVTAEVVEQGRGRKVIAFKKRRRQNSKRTRGHRQELTTIRISEILTDGAKPSKKAAEKKAPKADAAEGEAAKPKKAAPKKAAAKAESAE.

A compositionally biased stretch (basic residues) spans 74–84 (RRRQNSKRTRG). The tract at residues 74-142 (RRRQNSKRTR…KAAAKAESAE (69 aa)) is disordered. The span at 107 to 125 (KAAEKKAPKADAAEGEAAK) shows a compositional bias: basic and acidic residues. Residues 126 to 135 (PKKAAPKKAA) show a composition bias toward basic residues.

Belongs to the bacterial ribosomal protein bL21 family. As to quaternary structure, part of the 50S ribosomal subunit. Contacts protein L20.

Its function is as follows. This protein binds to 23S rRNA in the presence of protein L20. This Brucella melitensis biotype 2 (strain ATCC 23457) protein is Large ribosomal subunit protein bL21.